Here is a 421-residue protein sequence, read N- to C-terminus: MAENSNGALGCVVRCLSSESELQELCREEQLCCAELGVTRKNLSDFEVEYLWNYKKVQDQELYLVKWKYYPDSESTWEPRHHLKCNNLLKQFHLDLERELLRRAKAAGTKKTAVRCPRRLDQSLSHYLVLKAKQRKRLRQWAQQLNAKRSHLGLILVENEVDLEGPPRDFVYINEYRVGEGVTINRISAGCKCRDCFSDEGGCCPGAFQHKKAYNNEGQVKVKPGFPIYECNSCCRCGPSCPNRVVQKGIQYKFCIFRTSDGRGWGVRTLEKIRKNSFVMEYVGEIITSEEAERRGQIYDRQGTTYLFDLDYVEDVYTVDAARYGNISHFVNHSCKPNLQVYNVFIDNLDERLPRIAFFATRTIRTGEELTFDYNMQVDPVDVESSKMDSNFGIAGLPASPKKRVRVECKCGVSSCRKYLF.

Positions 46-104 (FEVEYLWNYKKVQDQELYLVKWKYYPDSESTWEPRHHLKCNNLLKQFHLDLERELLRRA) constitute a Chromo domain. Positions 189 to 249 (AGCKCRDCFS…SCPNRVVQKG (61 aa)) constitute a Pre-SET domain. Zn(2+) is bound by residues cysteine 191, cysteine 193, cysteine 196, cysteine 203, cysteine 204, cysteine 231, cysteine 235, cysteine 237, and cysteine 241. One can recognise an SET domain in the interval 252-375 (YKFCIFRTSD…TGEELTFDYN (124 aa)). Residues 263 to 265 (RGW), tyrosine 306, and 332 to 333 (NH) contribute to the S-adenosyl-L-methionine site. The Zn(2+) site is built by cysteine 335, cysteine 409, cysteine 411, and cysteine 416. Residues 405–421 (VRVECKCGVSSCRKYLF) enclose the Post-SET domain.

It belongs to the class V-like SAM-binding methyltransferase superfamily. Histone-lysine methyltransferase family. Suvar3-9 subfamily.

It is found in the nucleus. Its subcellular location is the chromosome. The protein localises to the centromere. The enzyme catalyses L-lysyl(9)-[histone H3] + 3 S-adenosyl-L-methionine = N(6),N(6),N(6)-trimethyl-L-lysyl(9)-[histone H3] + 3 S-adenosyl-L-homocysteine + 3 H(+). In terms of biological role, histone methyltransferase that specifically trimethylates 'Lys-9' of histone H3 using monomethylated H3 'Lys-9' as substrate. H3 'Lys-9' trimethylation represents a specific tag for epigenetic transcriptional repression by recruiting HP1 (CBX1, CBX3 and/or CBX5) proteins to methylated histones. Mainly functions in heterochromatin regions, thereby playing a central role in the establishment of constitutive heterochromatin at pericentric and telomere regions. H3 'Lys-9' trimethylation is also required to direct DNA methylation at pericentric repeats. SUV39H1 is targeted to histone H3 via its interaction with RB1 and is involved in many processes. This chain is Histone-lysine N-methyltransferase SUV39H1 (suv39h1), found in Xenopus laevis (African clawed frog).